A 184-amino-acid polypeptide reads, in one-letter code: MKNVTDSFLSLGHWSSAGSFGLNTDILATNPINLSVVLGVLIFFGKGVLSDLLDNRKQRILKTIQNSEELGVGAVEKLEKARSRLRKVKTEAEQFLVNGYSDIEREKFNLIKSTSNTLEQLENDKNETLRFEQQRLIYQVRQRFFQQALQRAIGTLNSCLNNELHLRTISANIGMLGTIKEITD.

The helical transmembrane segment at 27 to 49 threads the bilayer; the sequence is LATNPINLSVVLGVLIFFGKGVL.

It belongs to the ATPase B chain family. F-type ATPases have 2 components, F(1) - the catalytic core - and F(0) - the membrane proton channel. F(1) has five subunits: alpha(3), beta(3), gamma(1), delta(1), epsilon(1). F(0) has four main subunits: a(1), b(1), b'(1) and c(10-14). The alpha and beta chains form an alternating ring which encloses part of the gamma chain. F(1) is attached to F(0) by a central stalk formed by the gamma and epsilon chains, while a peripheral stalk is formed by the delta, b and b' chains.

It is found in the plastid. The protein resides in the chloroplast thylakoid membrane. Its function is as follows. F(1)F(0) ATP synthase produces ATP from ADP in the presence of a proton or sodium gradient. F-type ATPases consist of two structural domains, F(1) containing the extramembraneous catalytic core and F(0) containing the membrane proton channel, linked together by a central stalk and a peripheral stalk. During catalysis, ATP synthesis in the catalytic domain of F(1) is coupled via a rotary mechanism of the central stalk subunits to proton translocation. Component of the F(0) channel, it forms part of the peripheral stalk, linking F(1) to F(0). In Cuscuta exaltata (Tall dodder), this protein is ATP synthase subunit b, chloroplastic.